The following is a 91-amino-acid chain: MGRSLKKGPFVDSHLIEKIEKLGAAKKPIKTWSRRSMIIPDFVGHTFLVHNGRTFQSVYVTENMVGHRLGEFAPTRTFKKHGAHTEKASVK.

It belongs to the universal ribosomal protein uS19 family.

In terms of biological role, protein S19 forms a complex with S13 that binds strongly to the 16S ribosomal RNA. The sequence is that of Small ribosomal subunit protein uS19 from Methylacidiphilum infernorum (isolate V4) (Methylokorus infernorum (strain V4)).